The sequence spans 236 residues: Phosphoribosylaminoimidazole-succinocarboxamide synthase (236 aa).

This sequence belongs to the SAICAR synthetase family.

It carries out the reaction 5-amino-1-(5-phospho-D-ribosyl)imidazole-4-carboxylate + L-aspartate + ATP = (2S)-2-[5-amino-1-(5-phospho-beta-D-ribosyl)imidazole-4-carboxamido]succinate + ADP + phosphate + 2 H(+). The protein operates within purine metabolism; IMP biosynthesis via de novo pathway; 5-amino-1-(5-phospho-D-ribosyl)imidazole-4-carboxamide from 5-amino-1-(5-phospho-D-ribosyl)imidazole-4-carboxylate: step 1/2. This chain is Phosphoribosylaminoimidazole-succinocarboxamide synthase, found in Pseudomonas savastanoi pv. phaseolicola (strain 1448A / Race 6) (Pseudomonas syringae pv. phaseolicola (strain 1448A / Race 6)).